Consider the following 170-residue polypeptide: Mitotic-spindle organizing protein 2B (170 aa).

Disordered stretches follow at residues methionine 1–alanine 26 and serine 102–threonine 170. Positions glycine 8–proline 20 are enriched in low complexity. Residues proline 123 to glycine 132 show a composition bias toward polar residues. Residues serine 151–threonine 170 show a composition bias toward low complexity.

This sequence belongs to the MOZART2 family. Part of the gamma-tubulin complex. Interacts with TUBG1.

The protein localises to the cytoplasm. The protein resides in the cytoskeleton. Its subcellular location is the microtubule organizing center. It is found in the centrosome. It localises to the spindle. The protein is Mitotic-spindle organizing protein 2B (mzt2b) of Xenopus tropicalis (Western clawed frog).